The following is a 391-amino-acid chain: MDLEKNYPTPRTIRTGHGGVNQLGGVFVNGRPLPDVVRQRIVELAHQGVRPCDISRQLRVSHGCVSKILGRYYETGSIKPGVIGGSKPKVATPKVVEKIAEYKRQNPTMFAWEIRDRLLAERVCDNDTVPSVSSINRIIRTKVQQPPNQPVPASSHSIVSTGSVTQVSSVSTDSAGSSYSISGILGITSPSADTNKRKRDEGIQESPVPNGHSLPGRDFLRKQMRGDLFTQQQLEVLDRVFERQHYSDIFTTTEPIKPEQTTEYSAMASLAGGLDDMKANLTSPTPADIGSSVPGPQSYPIVTGRDLASTTLPGYPPHVPPAGQGSYSAPTLTGMVPGSEFSGSPYSHPQYSSYNDSWRFPNPGLLGSPYYYSPAARGAAPPAAATAYDRH.

The segment at residues 16–142 (GHGGVNQLGG…SSINRIIRTK (127 aa)) is a DNA-binding region (paired). Residues 19-75 (GVNQLGGVFVNGRPLPDVVRQRIVELAHQGVRPCDISRQLRVSHGCVSKILGRYYET) form a PAI subdomain region. Positions 94-142 (KVVEKIAEYKRQNPTMFAWEIRDRLLAERVCDNDTVPSVSSINRIIRTK) are RED subdomain. The tract at residues 182–218 (SGILGITSPSADTNKRKRDEGIQESPVPNGHSLPGRD) is disordered.

Interacts with ETS1; this interaction alters PAX5 DNA-binding properties. Binds DNA as a monomer. Interacts with TBP; this interaction allows PAX5 to interact with the basal transcription machinery. Interacts with RB1. Interacts with TLE4. Interacts with DAXX. In terms of processing, O-glycosylated. Post-translationally, phosphorylated by SYK. This phosphorylation plays an important role in the abolition of BLIMP1 repression by PAX5 in order to trigger plasma cell differentiation. Expressed in all B-lymphoid organs, in the embryonic midbrain and in adult testis.

It localises to the nucleus. Its function is as follows. Transcription factor that plays an essential role in commitment of lymphoid progenitors to the B-lymphocyte lineage. Fulfills a dual role by repressing B-lineage inappropriate genes and simultaneously activating B-lineage-specific genes. In turn, regulates cell adhesion and migration, induces V(H)-to-D(H)J(H) recombination, facilitates pre-B-cell receptor signaling and promotes development to the mature B-cell stage. Repression of the cohesin-release factor WAPL causes global changes of the chromosomal architecture in pro-B cells to facilitate the generation of a diverse antibody repertoire. The sequence is that of Paired box protein Pax-5 (Pax5) from Mus musculus (Mouse).